The following is a 178-amino-acid chain: uncharacterized protein (178 aa).

Helical transmembrane passes span 6–26 and 154–174; these read AIFGLLSVIFVIMAISQVSGL and KELVITAVLIISILGLGAMLI.

The protein localises to the cell membrane. This is an uncharacterized protein from Methanocaldococcus jannaschii (strain ATCC 43067 / DSM 2661 / JAL-1 / JCM 10045 / NBRC 100440) (Methanococcus jannaschii).